A 249-amino-acid chain; its full sequence is Acetylglutamate kinase (249 aa).

Substrate-binding positions include 42 to 43 (GG), Arg-64, and Asn-155.

The protein belongs to the acetylglutamate kinase family. ArgB subfamily.

Its subcellular location is the cytoplasm. The enzyme catalyses N-acetyl-L-glutamate + ATP = N-acetyl-L-glutamyl 5-phosphate + ADP. The protein operates within amino-acid biosynthesis; L-arginine biosynthesis; N(2)-acetyl-L-ornithine from L-glutamate: step 2/4. Its function is as follows. Catalyzes the ATP-dependent phosphorylation of N-acetyl-L-glutamate. This chain is Acetylglutamate kinase, found in Endomicrobium trichonymphae.